The following is a 344-amino-acid chain: Sorting nexin-16 (344 aa).

Residues 1 to 10 show a composition bias toward pro residues; the sequence is MATPYVPVPM. Disordered regions lie at residues 1-49 and 83-105; these read MATP…DSSV and SIEY…NWED. Residues 14–26 are compositionally biased toward polar residues; sequence NSASSFTNNRNQR. Residues 27–40 show a composition bias toward low complexity; that stretch reads SSSFGSVSTSSNSS. Positions 88–105 are enriched in basic and acidic residues; the sequence is ARPRDTEEQHPDALNWED. The PX domain maps to 105-218; sequence DRPSTPTILG…EFLCLDDPPG (114 aa). Residues R144, T146, and R184 each contribute to the a 1,2-diacyl-sn-glycero-3-phospho-(1D-myo-inositol-3-phosphate) site. Phosphoserine is present on S222. Residues 223 to 278 are a coiled coil; it reads LEESRAFCETLEETNYHLQRELLEKQKEVESLKKLLGEKQLHIDALETRIRTLSLE.

The protein belongs to the sorting nexin family. In terms of assembly, homooligomer. Interacts with EGFR.

It is found in the early endosome membrane. The protein localises to the late endosome membrane. Its subcellular location is the cytoplasm. The protein resides in the lysosome. Functionally, may be involved in several stages of intracellular trafficking. Plays a role in protein transport from early to late endosomes. Plays a role in protein transport to the lysosome. Promotes degradation of EGFR after EGF signaling. The protein is Sorting nexin-16 (Snx16) of Rattus norvegicus (Rat).